The primary structure comprises 357 residues: bZIP transcription factor 23 (357 aa).

The disordered stretch occupies residues 166-185; sequence PPVPPAPTPTAAAVPPPPPP. The region spanning 275–338 is the bZIP domain; that stretch reads VERRQRRMIK…KNEVLERMSR (64 aa). A basic motif region spans residues 277 to 296; it reads RRQRRMIKNRESAARSRQRK. A leucine-zipper region spans residues 303-317; the sequence is LEAEVAKLKELNDEL.

It belongs to the bZIP family. ABI5 subfamily. Highly expressed in leaves.

It is found in the nucleus. Its function is as follows. Transcriptional activator that mediates abscisic acid (ABA) signaling. Can regulate the expression of a wide spectrum of stress-related genes in response to abiotic stresses through an ABA-dependent regulation pathway. Confers ABA-dependent drought and salinity tolerance. Binds specifically to the ABA-responsive elements (ABRE) in the promoter of target genes to mediate stress-responsive ABA signaling. The protein is bZIP transcription factor 23 of Oryza sativa subsp. japonica (Rice).